Here is a 665-residue protein sequence, read N- to C-terminus: Cinnamate reductase (665 aa).

Glutamine 109 provides a ligand contact to FMN. The active-site Proton donor is the tyrosine 182. FMN-binding positions include arginine 230, arginine 319, and 341 to 342; that span reads GR. [4Fe-4S] cluster-binding residues include cysteine 365, cysteine 368, cysteine 372, and cysteine 384. The FAD site is built by alanine 415, glutamate 434, asparagine 442, lysine 452, and alanine 479.

The protein in the N-terminal section; belongs to the NADH:flavin oxidoreductase/NADH oxidase family. FMN is required as a cofactor. FAD serves as cofactor. The cofactor is [4Fe-4S] cluster.

It carries out the reaction 3-phenylpropanoate + NAD(+) = (E)-cinnamate + NADH + H(+). The protein operates within amino-acid degradation; L-phenylalanine degradation. In terms of biological role, involved in the fermentation of L-phenylalanine via a Stickland reaction. Catalyzes the reduction of (E)-cinnamate to yield 3-phenylpropionate. The protein is Cinnamate reductase of Clostridium sporogenes (strain ATCC 7955 / DSM 767 / NBRC 16411 / NCIMB 8053 / NCTC 8594 / PA 3679).